The chain runs to 798 residues: Integrin beta-1 (798 aa).

Residues 1–20 form the signal peptide; that stretch reads MNLQLIFWIGLISSVCCVFG. Over 21-728 the chain is Extracellular; sequence QADEDRCLKA…ETPECPTGPD (708 aa). In terms of domain architecture, PSI spans 26–76; it reads RCLKANAKSCGECIQAGPNCGWCTNSTFLQEGMPTSARCDDLEALKKKGCH. Disulfide bonds link cysteine 27/cysteine 45, cysteine 35/cysteine 464, cysteine 38/cysteine 64, cysteine 48/cysteine 75, cysteine 207/cysteine 213, cysteine 261/cysteine 301, cysteine 401/cysteine 415, cysteine 435/cysteine 462, cysteine 466/cysteine 486, cysteine 477/cysteine 489, cysteine 491/cysteine 500, cysteine 502/cysteine 533, cysteine 516/cysteine 531, cysteine 525/cysteine 536, cysteine 538/cysteine 553, cysteine 555/cysteine 576, cysteine 560/cysteine 574, cysteine 568/cysteine 579, cysteine 581/cysteine 590, cysteine 592/cysteine 615, cysteine 599/cysteine 613, cysteine 607/cysteine 618, cysteine 620/cysteine 630, cysteine 633/cysteine 636, cysteine 640/cysteine 691, cysteine 646/cysteine 665, cysteine 649/cysteine 661, and cysteine 699/cysteine 723. Positions 75-91 are enriched in basic and acidic residues; that stretch reads CHPNDTENPRGSKDIKK. A disordered region spans residues 75–105; sequence CHPNDTENPRGSKDIKKNKNVTNRSKGTAEK. 2 N-linked (GlcNAc...) asparagine glycosylation sites follow: asparagine 94 and asparagine 97. In terms of domain architecture, VWFA spans 140-378; the sequence is DYPIDLYYLM…QLIIDAYNSL (239 aa). Residues serine 152 and serine 154 each contribute to the Mg(2+) site. Ca(2+) contacts are provided by serine 154, aspartate 157, aspartate 158, and glutamate 189. Residues 207-213 are CX3CL1-binding; sequence CTNEQNC. Residue asparagine 212 is glycosylated (N-linked (GlcNAc...) asparagine). Ca(2+) contacts are provided by asparagine 244, aspartate 246, proline 248, and glutamate 249. A Mg(2+)-binding site is contributed by glutamate 249. Asparagine 269 carries an N-linked (GlcNAc...) asparagine glycan. Residues 295-314 form a CX3CL1-binding region; sequence LPNDGQCHLKNDVYTMSHYY. Alanine 362 contributes to the Ca(2+) binding site. Positions 383 to 465 are interaction with TMEM182; that stretch reads ILENSKLPEG…IILQFICECE (83 aa). N-linked (GlcNAc...) asparagine glycans are attached at residues asparagine 406 and asparagine 417. I-EGF domains are found at residues 466-501, 502-554, 555-591, and 592-631; these read CQGE…RHCE, CSTD…KFCE, CDNF…SACD, and CSLD…PTCE. The N-linked (GlcNAc...) asparagine glycan is linked to asparagine 481. An N-linked (GlcNAc...) asparagine glycan is attached at asparagine 520. N-linked (GlcNAc...) asparagine glycosylation is present at asparagine 584. A glycan (N-linked (GlcNAc...) asparagine) is linked at asparagine 669. The chain crosses the membrane as a helical span at residues 729–749; it reads IIPIVAGVVAGIVLIGLALLL. The Cytoplasmic portion of the chain corresponds to 750–798; the sequence is IWKLLMIIHDRREFAKFEKERMNAKWDTGENPIYKSAVTTVVNPKYEGK. The tract at residues 762 to 767 is signal for sorting from recycling endosomes; interaction with ACAP1; the sequence is EFAKFE. Threonine 777 carries the post-translational modification Phosphothreonine. Residue tyrosine 783 is modified to Phosphotyrosine. Serine 785 carries the post-translational modification Phosphoserine. Positions 785 to 792 are interaction with ITGB1BP1; the sequence is SAVTTVVN. Threonine 789 carries the post-translational modification Phosphothreonine. N6-acetyllysine; alternate is present on lysine 794. A Glycyl lysine isopeptide (Lys-Gly) (interchain with G-Cter in SUMO1); alternate cross-link involves residue lysine 794.

This sequence belongs to the integrin beta chain family. As to quaternary structure, interacts with seprase FAP (seprase); the interaction occurs at the cell surface of invadopodia membrane in a collagen-dependent manner. Heterodimer of an alpha and a beta subunit. Beta-1 associates with either alpha-1, alpha-2, alpha-3, alpha-4, alpha-5, alpha-6, alpha-7, alpha-8, alpha-9, alpha-10, alpha-11 or alpha-V. ITGA6:ITGB1 is found in a complex with CD9; interaction takes place in oocytes and is involved in sperm-egg fusion. Binds LGALS3BP and NMRK2, when associated with alpha-7, but not with alpha-5. Interacts with FLNA, FLNB, FLNC and RANBP9. Interacts with KRT1 in the presence of RACK1 and SRC. Interacts with JAML; integrin alpha-4/beta-1 may regulate leukocyte to endothelial cells adhesion by controlling JAML homodimerization. Interacts with RAB21. Interacts (via the cytoplasmic region) with RAB25 (via the hypervariable C-terminal region). Interacts with MYO10. Interacts with ITGB1BP1 (via C-terminal region); the interaction is a prerequisite for focal adhesion disassembly. Interacts with TLN1; the interaction is prevented by competitive binding of ITGB1BP1. Interacts with ACAP1; required for ITGB1 recycling. Interacts with ASAP3. Interacts with FERMT2; the interaction is inhibited in presence of ITGB1BP1. Interacts with DAB2. Interacts with FGR and HCK. Interacts with alpha-7A and alpha-7B in adult skeletal muscle. Interacts with alpha-7B in cardiomyocytes of adult heart. Interacts with EMP2; the interaction may be direct or indirect and ITGB1 has a heterodimer form. ITGA5:ITGB1 interacts with CCN3. ITGA4:ITGB1 is found in a ternary complex with CX3CR1 and CX3CL1. ITGA5:ITGB1 interacts with FBN1. ITGA5:ITGB1 acts as a receptor for fibronectin FN1 and mediates R-G-D-dependent cell adhesion to FN1. ITGA5:ITGB1 interacts with IL1B. Interacts with MDK. ITGA4:ITGB1 interacts with MDK; this interaction mediates MDK-induced osteoblast cells migration through PXN phosphorylation. ITGA6:ITGB1 interacts with MDK; this interaction mediates MDK-induced neurite-outgrowth. ITGA5:ITGB1 interacts with ACE2. Interacts with TMEM182 and LAMB1. Interacts with tensin TNS3; TNS3 also interacts with PEAK1, thus acting as an adapter molecule to bridge the association of PEAK1 with ITGB1. Interacts with tensin TNS4; the interaction displaces tensin TNS3 from the ITGB1 cytoplasmic tail and promotes ITGB1 stability. Integrin ITGA9:ITGB1 interacts with SPP1/OPN (via N-terminus). Integrin ITGA9:ITGB1 interacts with TNC/TNFN3 (via the 3rd Fibronectin type-III domain). Integrins ITGA4:ITGB1 and ITGA9:ITGB1 interact with SVEP1 (via Sushi domain 21); thereby inhibit Ca(2+) intracellular signaling and as a result repress vasocontraction. ITGA4:ITGB1 and ITGA5:ITGB1 interacts with SELP. Interacts with CD248. ITGA5:ITGB1 interacts with IGFBP1. ITGA4:ITGB1 interacts with BCAM. Interacts with ADGRG6.

Its subcellular location is the cell membrane. The protein resides in the cell projection. It localises to the invadopodium membrane. It is found in the ruffle membrane. The protein localises to the recycling endosome. Its subcellular location is the melanosome. The protein resides in the cell junction. It localises to the focal adhesion. It is found in the lamellipodium. The protein localises to the ruffle. In terms of biological role, integrins alpha-1/beta-1, alpha-2/beta-1, alpha-10/beta-1 and alpha-11/beta-1 are receptors for collagen. Integrins alpha-1/beta-1 and alpha-2/beta-2 recognize the proline-hydroxylated sequence G-F-P-G-E-R in collagen. Integrins alpha-2/beta-1, alpha-3/beta-1, alpha-4/beta-1, alpha-5/beta-1, alpha-8/beta-1, alpha-10/beta-1, alpha-11/beta-1 and alpha-V/beta-1 are receptors for fibronectin. Alpha-4/beta-1 recognizes one or more domains within the alternatively spliced CS-1 and CS-5 regions of fibronectin. Integrin alpha-5/beta-1 is a receptor for fibrinogen. Integrin alpha-1/beta-1, alpha-2/beta-1, alpha-6/beta-1 and alpha-7/beta-1 are receptors for lamimin. Integrin alpha-6/beta-1 (ITGA6:ITGB1) is present in oocytes and is involved in sperm-egg fusion. Integrin alpha-4/beta-1 is a receptor for VCAM1 and recognizes the sequence Q-I-D-S in VCAM1. Integrin alpha-9/beta-1 is a receptor for VCAM1, cytotactin and osteopontin. It recognizes the sequence A-E-I-D-G-I-E-L in cytotactin. Integrin alpha-3/beta-1 is a receptor for epiligrin, thrombospondin and CSPG4. Integrin alpha-3/beta-1 provides a docking site for FAP (seprase) at invadopodia plasma membranes in a collagen-dependent manner and hence may participate in the adhesion, formation of invadopodia and matrix degradation processes, promoting cell invasion. Alpha-3/beta-1 may mediate with LGALS3 the stimulation by CSPG4 of endothelial cells migration. Integrin alpha-V/beta-1 is a receptor for vitronectin. Beta-1 integrins recognize the sequence R-G-D in a wide array of ligands. When associated with alpha-7/beta-1 integrin, regulates cell adhesion and laminin matrix deposition. Involved in promoting endothelial cell motility and angiogenesis. Involved in osteoblast compaction through the fibronectin fibrillogenesis cell-mediated matrix assembly process and the formation of mineralized bone nodules. May be involved in up-regulation of the activity of kinases such as PKC via binding to KRT1. Together with KRT1 and RACK1, serves as a platform for SRC activation or inactivation. Plays a mechanistic adhesive role during telophase, required for the successful completion of cytokinesis. ITGA4:ITGB1 binds to fractalkine (CX3CL1) and may act as its coreceptor in CX3CR1-dependent fractalkine signaling. ITGA4:ITGB1 and ITGA5:ITGB1 bind to PLA2G2A via a site (site 2) which is distinct from the classical ligand-binding site (site 1) and this induces integrin conformational changes and enhanced ligand binding to site 1. ITGA5:ITGB1 acts as a receptor for fibrillin-1 (FBN1) and mediates R-G-D-dependent cell adhesion to FBN1. ITGA5:ITGB1 is a receptor for IL1B and binding is essential for IL1B signaling. ITGA5:ITGB3 is a receptor for soluble CD40LG and is required for CD40/CD40LG signaling. Plays an important role in myoblast differentiation and fusion during skeletal myogenesis. ITGA9:ITGB1 may play a crucial role in SVEP1/polydom-mediated myoblast cell adhesion. Integrins ITGA9:ITGB1 and ITGA4:ITGB1 repress PRKCA-mediated L-type voltage-gated channel Ca(2+) influx and ROCK-mediated calcium sensitivity in vascular smooth muscle cells via their interaction with SVEP1, thereby inhibit vasocontraction. In Camelus bactrianus (Bactrian camel), this protein is Integrin beta-1.